Here is a 353-residue protein sequence, read N- to C-terminus: Ferredoxin--NADP reductase (353 aa).

FAD-binding residues include aspartate 33, glutamine 41, tyrosine 46, valine 86, phenylalanine 121, aspartate 293, and threonine 333.

It belongs to the ferredoxin--NADP reductase type 2 family. In terms of assembly, homodimer. Requires FAD as cofactor.

It carries out the reaction 2 reduced [2Fe-2S]-[ferredoxin] + NADP(+) + H(+) = 2 oxidized [2Fe-2S]-[ferredoxin] + NADPH. The polypeptide is Ferredoxin--NADP reductase (Verminephrobacter eiseniae (strain EF01-2)).